The chain runs to 373 residues: Pulmonary surfactant-associated protein B (373 aa).

The first 22 residues, 1–22 (MAKSHLLPWLLLLPILCGPGTA), serve as a signal peptide directing secretion. A propeptide spanning residues 23 to 187 (AAITYSLACA…PQTQDLSEQL (165 aa)) is cleaved from the precursor. A Saposin A-type domain is found at 24-64 (AITYSLACAQGPEFWCQSLEQALQCRALGHCLQEVWGHVEA). 3 Saposin B-type domains span residues 64–146 (ADDL…KPRH), 191–268 (PIPY…SSED), and 287–362 (QDSD…AAPF). Intrachain disulfides connect Cys68–Cys142, Cys71–Cys136, Cys99–Cys111, Cys195–Cys264, Cys198–Cys258, Cys222–Cys233, Cys291–Cys358, Cys294–Cys352, and Cys317–Cys327. Asn73 carries N-linked (GlcNAc...) asparagine glycosylation. A propeptide spanning residues 267–373 (EDSAGPALPA…PLQCVHSPHF (107 aa)) is cleaved from the precursor. Asn303 carries an N-linked (GlcNAc...) asparagine glycan.

Homodimer; disulfide-linked.

Its subcellular location is the secreted. It localises to the extracellular space. The protein localises to the surface film. In terms of biological role, pulmonary surfactant-associated proteins promote alveolar stability by lowering the surface tension at the air-liquid interface in the peripheral air spaces. SP-B increases the collapse pressure of palmitic acid to nearly 70 millinewtons per meter. The sequence is that of Pulmonary surfactant-associated protein B (SFTPB) from Bos taurus (Bovine).